Consider the following 434-residue polypeptide: Xylose isomerase (434 aa).

Active-site residues include His100 and Asp103. The Mg(2+) site is built by Glu231, Glu267, His270, Asp295, Asp306, Asp308, and Asp338.

Belongs to the xylose isomerase family. In terms of assembly, homotetramer. The cofactor is Mg(2+).

It is found in the cytoplasm. The enzyme catalyses alpha-D-xylose = alpha-D-xylulofuranose. This chain is Xylose isomerase, found in Ruegeria pomeroyi (strain ATCC 700808 / DSM 15171 / DSS-3) (Silicibacter pomeroyi).